The sequence spans 58 residues: Small ribosomal subunit protein bS21 (58 aa).

This sequence belongs to the bacterial ribosomal protein bS21 family.

In Synechococcus sp. (strain CC9605), this protein is Small ribosomal subunit protein bS21.